A 244-amino-acid polypeptide reads, in one-letter code: Small ribosomal subunit protein uS3 (244 aa).

The KH type-2 domain occupies 39 to 107 (IRELIKKESF…KLIINVEEIK (69 aa)). Residues 216-244 (LPVYKNKKNDKNKKRRNNNRKGKSQAAKN) form a disordered region. Basic residues predominate over residues 220 to 238 (KNKKNDKNKKRRNNNRKGK).

This sequence belongs to the universal ribosomal protein uS3 family. Part of the 30S ribosomal subunit. Forms a tight complex with proteins S10 and S14.

Its function is as follows. Binds the lower part of the 30S subunit head. Binds mRNA in the 70S ribosome, positioning it for translation. This is Small ribosomal subunit protein uS3 from Finegoldia magna (strain ATCC 29328 / DSM 20472 / WAL 2508) (Peptostreptococcus magnus).